The primary structure comprises 464 residues: Colanic acid biosynthesis protein WcaM (464 aa).

It participates in slime biogenesis; slime polysaccharide biosynthesis. This Shigella flexneri protein is Colanic acid biosynthesis protein WcaM (wcaM).